A 304-amino-acid chain; its full sequence is Uricase (304 aa).

An N-acetylalanine modification is found at alanine 2. Residues lysine 10 and lysine 23 each carry the N6-acetyllysine; alternate modification. N6-succinyllysine; alternate is present on residues lysine 10 and lysine 23. Lysine 23 acts as the Charge relay system in catalysis. N6-acetyllysine is present on residues lysine 27 and lysine 36. Residues serine 39 and serine 63 each carry the phosphoserine modification. The Charge relay system role is filled by threonine 68. Urate contacts are provided by threonine 68 and aspartate 69. Lysine 118, lysine 122, and lysine 164 each carry N6-acetyllysine. Phenylalanine 170 contributes to the urate binding site. N6-acetyllysine occurs at positions 175 and 185. Urate is bound at residue arginine 187. An N6-acetyllysine; alternate mark is found at lysine 221 and lysine 228. 2 positions are modified to N6-succinyllysine; alternate: lysine 221 and lysine 228. Serine 232 carries the phosphoserine modification. Urate is bound by residues valine 235, glutamine 236, and asparagine 262. Histidine 264 (charge relay system) is an active-site residue. Lysine 278 carries the N6-acetyllysine modification. Position 289 is a phosphotyrosine (tyrosine 289). The Microbody targeting signal signature appears at 302–304 (SRL).

Belongs to the uricase family. As to quaternary structure, homotetramer.

Its subcellular location is the peroxisome. The enzyme catalyses urate + O2 + H2O = 5-hydroxyisourate + H2O2. It functions in the pathway purine metabolism; urate degradation; (S)-allantoin from urate: step 1/3. Functionally, catalyzes the oxidation of uric acid to 5-hydroxyisourate, which is further processed to form (S)-allantoin. The chain is Uricase (UOX) from Bos taurus (Bovine).